Reading from the N-terminus, the 262-residue chain is Ribosome-recycling factor, mitochondrial (262 aa).

Residues 1–55 (MALGLRCFRLVHPAFCNSLAALTRPVSEVTLQTVRGRQNDHGQCMAYAAVPVRHF) constitute a mitochondrion transit peptide.

Belongs to the RRF family.

It is found in the mitochondrion. Functionally, responsible for the disassembly of ribosomes from messenger RNA at the termination of mitochondrial protein biosynthesis. Acts in collaboration with GFM2. Promotes mitochondrial ribosome recycling by dissolution of intersubunit contacts. The polypeptide is Ribosome-recycling factor, mitochondrial (MRRF) (Bos taurus (Bovine)).